We begin with the raw amino-acid sequence, 116 residues long: Large ribosomal subunit protein bL19 (116 aa).

Belongs to the bacterial ribosomal protein bL19 family.

Its function is as follows. This protein is located at the 30S-50S ribosomal subunit interface and may play a role in the structure and function of the aminoacyl-tRNA binding site. This is Large ribosomal subunit protein bL19 from Magnetococcus marinus (strain ATCC BAA-1437 / JCM 17883 / MC-1).